The chain runs to 149 residues: MHCPFCAAVDTKVIDSRLVSDGSQVRRRRQCLDCNERFTTFEVAELVLPRVIKSDEVREPFNEEKLRRGMLKALEKRPVSSDDVETAISHIKSQLRATGEREVPTKMVGNLVMEALKRLDKVAYIRFASVYRSFEDVREFGEEIARLQD.

A zinc finger spans residues Cys-3–Cys-34. One can recognise an ATP-cone domain in the interval Pro-49–Glu-139.

Belongs to the NrdR family. The cofactor is Zn(2+).

Functionally, negatively regulates transcription of bacterial ribonucleotide reductase nrd genes and operons by binding to NrdR-boxes. This Yersinia pseudotuberculosis serotype O:1b (strain IP 31758) protein is Transcriptional repressor NrdR.